The sequence spans 521 residues: 3,4-dihydroxyphenylacetaldehyde synthase (521 aa).

Lysine 306 carries the N6-(pyridoxal phosphate)lysine modification.

The protein belongs to the group II decarboxylase family. Pyridoxal 5'-phosphate is required as a cofactor. Highly expressed in the cuticle and midgut. Low expression in the head and thorax.

The catalysed reaction is L-dopa + O2 + H2O + H(+) = 3,4-dihydroxyphenylacetaldehyde + H2O2 + NH4(+) + CO2. Functionally, catalyzes the decarboxylation-oxidative deamination of L-3,4-dihydroxyphenylalanine (L-DOPA) to 3,4-dihydroxylphenylacetaldehyde (DHPAA). Involved in cuticle development. Probably responsible for the protein cross-linking during the development of flexible cuticles. The sequence is that of 3,4-dihydroxyphenylacetaldehyde synthase from Aedes aegypti (Yellowfever mosquito).